The chain runs to 221 residues: Serine/arginine-rich splicing factor 9 (221 aa).

RRM domains follow at residues 14 to 89 (GRIY…FPRA) and 111 to 187 (FRVL…PERG). Lysine 36 is covalently cross-linked (Glycyl lysine isopeptide (Lys-Gly) (interchain with G-Cter in SUMO2)). Residues 187 to 198 (GTSYGCSRSRSG) show a composition bias toward low complexity. The tract at residues 187-221 (GTSYGCSRSRSGSRGRDSPYQSRGSPHYFSPFRPY) is disordered. An interaction with SAFB1 region spans residues 188–200 (TSYGCSRSRSGSR). Phosphoserine occurs at positions 189, 193, 195, 204, 208, and 211. At tyrosine 214 the chain carries Phosphotyrosine. Serine 216 is subject to Phosphoserine.

Belongs to the splicing factor SR family. As to quaternary structure, interacts with KHDRBS3. Interacts with HABP4. Interacts with NOL3/ARC/NOP30. Interacts with NSEP1/YB-1/YB1. Interacts with SAFB/SAFB1. Interacts with SRSF6/SFRS6. Interacts with TRA2B/SFRS10. Interacts with C1QBP. May also interact with DUSP11/PIR1. In terms of processing, extensively phosphorylated on serine residues in the RS domain.

Its subcellular location is the nucleus. In terms of biological role, plays a role in constitutive splicing and can modulate the selection of alternative splice sites. Represses the splicing of MAPT/Tau exon 10. The sequence is that of Serine/arginine-rich splicing factor 9 (Srsf9) from Rattus norvegicus (Rat).